Here is a 101-residue protein sequence, read N- to C-terminus: Small ribosomal subunit protein uS14A (101 aa).

The disordered stretch occupies residues lysine 28–proline 57. The span at serine 33–glutamine 45 shows a compositional bias: polar residues.

The protein belongs to the universal ribosomal protein uS14 family. Part of the 30S ribosomal subunit. Contacts proteins S3 and S10.

In terms of biological role, binds 16S rRNA, required for the assembly of 30S particles and may also be responsible for determining the conformation of the 16S rRNA at the A site. The protein is Small ribosomal subunit protein uS14A of Mycobacterium bovis (strain ATCC BAA-935 / AF2122/97).